The sequence spans 335 residues: Glyceraldehyde-3-phosphate dehydrogenase (335 aa).

Residues 13-14 and glycine 111 contribute to the NAD(+) site; that span reads TI. 140 to 142 serves as a coordination point for D-glyceraldehyde 3-phosphate; it reads SCN. The active-site Nucleophile is cysteine 141. Arginine 169 serves as a coordination point for NAD(+). D-glyceraldehyde 3-phosphate-binding positions include threonine 171 and 195–196; that span reads HG. Position 300 (glutamine 300) interacts with NAD(+).

It belongs to the glyceraldehyde-3-phosphate dehydrogenase family. In terms of assembly, homotetramer.

It is found in the cytoplasm. The enzyme catalyses D-glyceraldehyde 3-phosphate + phosphate + NADP(+) = (2R)-3-phospho-glyceroyl phosphate + NADPH + H(+). It catalyses the reaction D-glyceraldehyde 3-phosphate + phosphate + NAD(+) = (2R)-3-phospho-glyceroyl phosphate + NADH + H(+). Its pathway is carbohydrate degradation; glycolysis; pyruvate from D-glyceraldehyde 3-phosphate: step 1/5. This Methanosarcina mazei (strain ATCC BAA-159 / DSM 3647 / Goe1 / Go1 / JCM 11833 / OCM 88) (Methanosarcina frisia) protein is Glyceraldehyde-3-phosphate dehydrogenase.